Consider the following 68-residue polypeptide: U4-agatoxin-Ao1a (68 aa).

Residues Met1 to Ala25 form the signal peptide. Positions Glu26 to Arg36 are excised as a propeptide. Disulfide bonds link Cys39–Cys52, Cys46–Cys57, Cys51–Cys66, and Cys59–Cys64.

Belongs to the neurotoxin 33 family. As to expression, expressed by the venom gland.

It localises to the secreted. The sequence is that of U4-agatoxin-Ao1a from Agelena orientalis (Funnel-web spider).